A 90-amino-acid polypeptide reads, in one-letter code: UPF0223 protein LMHCC_1569 (90 aa).

This sequence belongs to the UPF0223 family.

This chain is UPF0223 protein LMHCC_1569, found in Listeria monocytogenes serotype 4a (strain HCC23).